The following is a 365-amino-acid chain: Forkhead box protein E4 (365 aa).

Residues 1-13 (MDSPDSVRVKCES) show a composition bias toward basic and acidic residues. The tract at residues 1-46 (MDSPDSVRVKCESKGSCSPEEGLNNGLPEEHNQASGGRRRKRPVQR) is disordered. The fork-head DNA-binding region spans 48–142 (KPPYSYIALI…DNGSFLRRRK (95 aa)).

As to expression, first expressed at the end of gastrulation (stage 13) in the anterior ectodermal placode. During intermediate neural plate stages (stages 14-16), expression expands to the presumptive nasal ectoderm (PNE) and the presumptive lens ectoderm (PLE). By stages 18-21, expression begins to deplete in the PNE, while intensifying in the PLE so that by late neural stages (stages 22), expression is restricted to the PLE. Throughout tailbud stages (stage 23-31), expression is maintained in the lens placode and lens vesicle. In the maturing lens (stage 32-onwards), expression is restricted to the anterior lens epithelium, where it remains during the tadpole stage. In tadpoles there is additional expression in the ventral midline of the pharynx. Expression continues in the adult eye.

It localises to the nucleus. In terms of biological role, probable transcription factor. Mediates lens formation in the embryo by promoting the proliferation of the specified lens ectoderm and suppressing its terminal differentiation. This Xenopus laevis (African clawed frog) protein is Forkhead box protein E4.